The primary structure comprises 337 residues: 2-oxoglutarate receptor 1 (337 aa).

Residues 1–38 (MIEPLDSPASDSDFLDYPSALGNCTDEQISFKMQYLPV) lie on the Extracellular side of the membrane. Asn-23 is a glycosylation site (N-linked (GlcNAc...) asparagine). Residues 39–59 (IYSIIFLVGFPGNTVAISIYI) form a helical membrane-spanning segment. Over 60-69 (FKMRPWRGST) the chain is Cytoplasmic. Residues 70-90 (VIMLNLALTDLLYLTSLPFLI) form a helical membrane-spanning segment. Topologically, residues 91-116 (HYYASGENWIFGDFMCKFIRFGFHFN) are extracellular. A disulfide bond links Cys-106 and Cys-183. The chain crosses the membrane as a helical span at residues 117-137 (LYSSILFLTCFSLFRYVVIIH). Residues 138 to 151 (PMSCFSIQKTRWAV) are Cytoplasmic-facing. A helical transmembrane segment spans residues 152–172 (VACAGVWVISLVAVMPMTFLI). At 173–200 (TSTTRTNRSACLDLTSSDDLTTIKWYNL) the chain is on the extracellular side. The chain crosses the membrane as a helical span at residues 201-221 (ILTATTFCLPLVIVTLCYTTI). Topologically, residues 222–242 (ISTLTHGPRTHSCFKQKARRL) are cytoplasmic. A helical membrane pass occupies residues 243–263 (TILLLLVFYICFLPFHILRVI). Over 264 to 284 (RIESRLLSISCSIESHIHEAY) the chain is Extracellular. Residues 285–305 (IVSRPLAALNTFGNLLLYVVV) traverse the membrane as a helical segment. The Cytoplasmic portion of the chain corresponds to 306 to 337 (SNNFQQAFCSIVRCKASGDLEQGKKDSCSNNP).

The protein belongs to the G-protein coupled receptor 1 family. As to expression, predominantly expressed in the kidney with limited expression in the testis and the smooth muscle. Expressed in SLC26A4/pendrin-positive type B and non-A non-B intercalated cells (at protein level).

It is found in the cell membrane. Functionally, g protein-coupled receptor for dicarboxylates and amino dicarboxylates. Receptor for itaconate produced by activated macrophages upon bacterial infection. In the respiratory epithelium, couples the binding of itaconate to the activation of GNA11 and downstream intracellular Ca(2+) release, leading to mucocilliary clearance of airborne pathogens. Receptor for leukotriene E4 (LTE4) produced by mast cells upon allergic inflammation. Binds with high affinity to LTE4 and elicits mucin release from pulmonary epithelium in response to airborne fungi allergens. Regulates mucin-producing goblet cell homeostasis. Receptor for alpha-ketoglutarate produced by proximal tubule renal cells upon metabolic alkalosis. In an intrarenal paracrine signaling pathway, binds alpha-ketoglutarate and drives transepithelial salt reabsorption and bicarbonate secretion by SLC26A4/pendrin-positive intercalated cells. The sequence is that of 2-oxoglutarate receptor 1 (Oxgr1) from Mus musculus (Mouse).